The chain runs to 91 residues: Probable Fe(2+)-trafficking protein (91 aa).

This sequence belongs to the Fe(2+)-trafficking protein family.

In terms of biological role, could be a mediator in iron transactions between iron acquisition and iron-requiring processes, such as synthesis and/or repair of Fe-S clusters in biosynthetic enzymes. The protein is Probable Fe(2+)-trafficking protein of Shewanella denitrificans (strain OS217 / ATCC BAA-1090 / DSM 15013).